We begin with the raw amino-acid sequence, 140 residues long: Ribosome maturation factor RimP (140 aa).

Belongs to the RimP family.

Its subcellular location is the cytoplasm. Functionally, required for maturation of 30S ribosomal subunits. This Campylobacter hominis (strain ATCC BAA-381 / DSM 21671 / CCUG 45161 / LMG 19568 / NCTC 13146 / CH001A) protein is Ribosome maturation factor RimP.